The chain runs to 505 residues: uncharacterized protein (505 aa).

Residues 11–27 (IGIIGGGIVGWLAAIAL) traverse the membrane as a helical segment.

It is found in the membrane. This is an uncharacterized protein from Sinorhizobium fredii (strain NBRC 101917 / NGR234).